We begin with the raw amino-acid sequence, 221 residues long: Deoxyribose-phosphate aldolase (221 aa).

Asp-89 functions as the Proton donor/acceptor in the catalytic mechanism. Lys-151 functions as the Schiff-base intermediate with acetaldehyde in the catalytic mechanism. Lys-180 acts as the Proton donor/acceptor in catalysis.

The protein belongs to the DeoC/FbaB aldolase family. DeoC type 1 subfamily.

The protein resides in the cytoplasm. The enzyme catalyses 2-deoxy-D-ribose 5-phosphate = D-glyceraldehyde 3-phosphate + acetaldehyde. Its pathway is carbohydrate degradation; 2-deoxy-D-ribose 1-phosphate degradation; D-glyceraldehyde 3-phosphate and acetaldehyde from 2-deoxy-alpha-D-ribose 1-phosphate: step 2/2. Functionally, catalyzes a reversible aldol reaction between acetaldehyde and D-glyceraldehyde 3-phosphate to generate 2-deoxy-D-ribose 5-phosphate. The sequence is that of Deoxyribose-phosphate aldolase from Mesomycoplasma hyopneumoniae (strain 232) (Mycoplasma hyopneumoniae).